Reading from the N-terminus, the 302-residue chain is Tetrahydromethanopterin S-methyltransferase subunit E (302 aa).

The next 6 helical transmembrane spans lie at 3 to 23, 86 to 106, 132 to 152, 155 to 175, 233 to 253, and 259 to 279; these read PLISMGVLALIGVAATIAGAS, PLFALVFGSLIAACVHATFAV, ITPIMGYAFITTFCILVVSYL, VVLGHPFPLTMLAFIWGITIG, PVTGLAFGMTVFLGSWITTIF, and LGWLSVIAGIVIVFILIIWNW.

The protein belongs to the MtrE family. As to quaternary structure, the complex is composed of 8 subunits; MtrA, MtrB, MtrC, MtrD, MtrE, MtrF, MtrG and MtrH.

The protein localises to the cell membrane. It carries out the reaction 5-methyl-5,6,7,8-tetrahydromethanopterin + coenzyme M + 2 Na(+)(in) = 5,6,7,8-tetrahydromethanopterin + methyl-coenzyme M + 2 Na(+)(out). It functions in the pathway one-carbon metabolism; methanogenesis from CO(2); methyl-coenzyme M from 5,10-methylene-5,6,7,8-tetrahydromethanopterin: step 2/2. Functionally, part of a complex that catalyzes the formation of methyl-coenzyme M and tetrahydromethanopterin from coenzyme M and methyl-tetrahydromethanopterin. This is an energy-conserving, sodium-ion translocating step. This chain is Tetrahydromethanopterin S-methyltransferase subunit E, found in Methanosarcina barkeri (strain Fusaro / DSM 804).